Here is a 364-residue protein sequence, read N- to C-terminus: MSEMGFLRSVAAVLLLAVFSHAAVVTENGLPIQWRKAPSDLSHLPISNTGVQVNPWVYSQRMTMLKMVINATNAYMSSMGPGEQENPLWSLPLQLGWKLKSGRLADPTPDSSSTCGSEASDPVCISPLSFFGCVNYYLSVLPFLAAVETGVVSSGGHQMLIQVPAEVAQDYCSSYSDCSTKHPNTMAKWHLFFQSLRQVSQSKESDFNKKDSILGLMWAAEEESIQTASGACTERQKLYSSPEVSFQQSSVNLGAFISAAHYHASIERSGKFMSHLPSRVLQEADSPPNIADLSTEENHALYMLSWMNSINQLLGGSLVDLWRKAMCSAQAREKGQAFLDDLILDPKFPGSSLWSIICVMSTSC.

The first 22 residues, 1-22, serve as a signal peptide directing secretion; sequence MSEMGFLRSVAAVLLLAVFSHA. Asn70 carries an N-linked (GlcNAc...) asparagine glycan.

The protein belongs to the LEG1 family. In terms of tissue distribution, detected in all tissues tested, with the highest levels in serum (at protein level). At mRNA level, only expressed in liver.

It is found in the secreted. Its function is as follows. Involved in early development of liver, exocrine pancreas and intestine, probably through cell cycle regulation. In liver, its function is partially redundant with leg1a function. This Danio rerio (Zebrafish) protein is Protein leg1b.